The chain runs to 108 residues: UPF0102 protein Shewmr4_3685 (108 aa).

The protein belongs to the UPF0102 family.

The protein is UPF0102 protein Shewmr4_3685 of Shewanella sp. (strain MR-4).